A 502-amino-acid chain; its full sequence is Beta-amyrin 28-monooxygenase CYP716A379 (502 aa).

A helical; Signal-anchor for type II membrane protein membrane pass occupies residues 3–23 (LITLLSALLVLAIVSLSTFFV). 2 N-linked (GlcNAc...) asparagine glycosylation sites follow: Asn-88 and Asn-181. Position 444 (Cys-444) interacts with heme.

This sequence belongs to the cytochrome P450 family. Heme serves as cofactor. As to expression, mainly expressed in flowers and flower buds, to a lesser extent in young leaves and, at low levels, in old leaves, stems and roots.

Its subcellular location is the membrane. The catalysed reaction is beta-amyrin + 3 reduced [NADPH--hemoprotein reductase] + 3 O2 = oleanolate + 3 oxidized [NADPH--hemoprotein reductase] + 4 H2O + 4 H(+). The protein operates within secondary metabolite biosynthesis; terpenoid biosynthesis. Functionally, component of the oleanane-type triterpene saponins (e.g. saponarioside A and saponarioside B) biosynthetic pathway, leading to the production of natural products with detergent properties used as traditional sources of soap. An oxidoreductase that facilitates the oxidation of the methyl group to a carboxyl group at the C-28 position of beta-amyrin, resulting in the formation of oleanolic acid. Catalyzes also the subsequent oxidation of the methyl group to a&lt; carboxyl group at the C-16 alpha position of oleanolic acid, resulting in the formation of echinocystic acid. The protein is Beta-amyrin 28-monooxygenase CYP716A379 of Saponaria officinalis (Common soapwort).